A 426-amino-acid polypeptide reads, in one-letter code: Gamma-glutamyl phosphate reductase (426 aa).

Belongs to the gamma-glutamyl phosphate reductase family.

The protein localises to the cytoplasm. The catalysed reaction is L-glutamate 5-semialdehyde + phosphate + NADP(+) = L-glutamyl 5-phosphate + NADPH + H(+). It functions in the pathway amino-acid biosynthesis; L-proline biosynthesis; L-glutamate 5-semialdehyde from L-glutamate: step 2/2. In terms of biological role, catalyzes the NADPH-dependent reduction of L-glutamate 5-phosphate into L-glutamate 5-semialdehyde and phosphate. The product spontaneously undergoes cyclization to form 1-pyrroline-5-carboxylate. This Ralstonia pickettii (strain 12J) protein is Gamma-glutamyl phosphate reductase.